A 222-amino-acid polypeptide reads, in one-letter code: Small ribosomal subunit protein eS8z (222 aa).

2 disordered regions span residues 1–37 and 125–147; these read MGISRDSIHKRRATGGKQKQWRKKRKYEMGRQPANTK and KKKSASSTKKDGEEGEEAAVAAP. Positions 8–26 are enriched in basic residues; the sequence is IHKRRATGGKQKQWRKKRK.

The protein belongs to the eukaryotic ribosomal protein eS8 family.

The polypeptide is Small ribosomal subunit protein eS8z (RPS8A) (Arabidopsis thaliana (Mouse-ear cress)).